A 179-amino-acid chain; its full sequence is MAKLHDKYKETVIAELSKKFGYTSVMQVPRIEKITLNMGVGEAVADKKIMENAVRDMTAIAGQKPVVTVARKSVAGFKIREGYPIGCKVTLRGERMWEFFERLLDIAIPRIRDFRGLSAKSFDGRGNYAMGVREQIIFPEIDYDKIDRVRGMDIVITTTAKNDEEGRALLDAFNFPFKK.

This sequence belongs to the universal ribosomal protein uL5 family. In terms of assembly, part of the 50S ribosomal subunit; part of the 5S rRNA/L5/L18/L25 subcomplex. Contacts the 5S rRNA and the P site tRNA. Forms a bridge to the 30S subunit in the 70S ribosome.

In terms of biological role, this is one of the proteins that bind and probably mediate the attachment of the 5S RNA into the large ribosomal subunit, where it forms part of the central protuberance. In the 70S ribosome it contacts protein S13 of the 30S subunit (bridge B1b), connecting the 2 subunits; this bridge is implicated in subunit movement. Contacts the P site tRNA; the 5S rRNA and some of its associated proteins might help stabilize positioning of ribosome-bound tRNAs. This Shewanella amazonensis (strain ATCC BAA-1098 / SB2B) protein is Large ribosomal subunit protein uL5.